A 286-amino-acid polypeptide reads, in one-letter code: uncharacterized protein (286 aa).

NADP(+) contacts are provided by Ile54, Asn128, and Lys162. The active-site Proton donor is Ser178. Residues Tyr192, Lys196, Ile225, and Thr227 each contribute to the NADP(+) site. Tyr192 functions as the Proton acceptor in the catalytic mechanism. Lys196 functions as the Lowers pKa of active site Tyr in the catalytic mechanism.

This sequence belongs to the short-chain dehydrogenases/reductases (SDR) family.

This is an uncharacterized protein from Schizosaccharomyces pombe (strain 972 / ATCC 24843) (Fission yeast).